We begin with the raw amino-acid sequence, 634 residues long: NRPS-independent siderophore synthetase rfs (634 aa).

NRPS-independent siderophore synthetase that catalyzes the rhizoferrin biosynthesis from citrate and diaminobutane via an ATP-dependent condensation of citrate with diaminobutane followed by the addition of a second citrate to the monocitryl-diaminobutane intermediate. Can also use as substrates the citrate and diaminobutane homologs oxaloacetic acid, diaminopropane, diaminobutane, diaminopentane, tricarballylic acid, hydroxylamine and ornithine. Forms only a mono-substituted intermediate with oxaloacetic acid and diaminopentane whereas both mono-citryl intermediates and full rhizoferrin derivatives were detected when diaminopropane, and ornithine were used as substrates. Tricarballylic acid only forms a rhizoferrin derivative, but no mono-substituted intermediate. The sequence is that of NRPS-independent siderophore synthetase rfs from Rhizopus delemar (strain RA 99-880 / ATCC MYA-4621 / FGSC 9543 / NRRL 43880) (Mucormycosis agent).